Reading from the N-terminus, the 144-residue chain is Granulocyte-macrophage colony-stimulating factor (144 aa).

A signal peptide spans 1–17; the sequence is MWLQNLLFLGIVVYSFS. Ser-22 carries an O-linked (GalNAc...) serine glycan. Thr-27 is a glycosylation site (O-linked (GalNAc...) threonine). Intrachain disulfides connect Cys-71–Cys-113 and Cys-105–Cys-138. The N-linked (GlcNAc...) asparagine glycan is linked to Asn-86.

Belongs to the GM-CSF family. In terms of assembly, monomer. The signaling GM-CSF receptor complex is a dodecamer of two head-to-head hexamers of two alpha, two beta, and two ligand subunits.

Its subcellular location is the secreted. Cytokine that stimulates the growth and differentiation of hematopoietic precursor cells from various lineages, including granulocytes, macrophages, eosinophils and erythrocytes. This Rattus norvegicus (Rat) protein is Granulocyte-macrophage colony-stimulating factor (Csf2).